The sequence spans 339 residues: Sphingomyelinase D (339 aa).

The first 21 residues, 1–21, serve as a signal peptide directing secretion; it reads MVSLLRLCSFLLAAGSILVQG. H60 is an active-site residue. Residues E80, D82, and D128 each contribute to the Mg(2+) site. Residues 309-316 carry the SMD-tail motif; sequence ATVDDNPW. Positions 313 to 339 are disordered; sequence DNPWSSMSKKGSSKSSWVKGEVPSIAH. The segment covering 317-328 has biased composition (low complexity); the sequence is SSMSKKGSSKSS.

This sequence belongs to the sphingomyelinase D/phospholipase D family. Mg(2+) serves as cofactor.

It localises to the secreted. It catalyses the reaction a sphingomyelin + H2O = an N-acylsphing-4-enine 1-phosphate + choline + H(+). Catalyzes the hydrolysis of sphingomyelin. Sphingomyelinases D are produced by some spider in their venoms, but also by arthropods such as ticks, or pathogenic bacteria and fungi. They might play a role in pathogenicity through different mechanisms, such as membrane destabilization and host cell penetration, but also pulmonary inflammation and cutaneous lesions. The sequence is that of Sphingomyelinase D from Arthroderma benhamiae (strain ATCC MYA-4681 / CBS 112371) (Trichophyton mentagrophytes).